Here is a 349-residue protein sequence, read N- to C-terminus: Sexual stage-specific protein G37 (349 aa).

The first 18 residues, 1-18 (MKLYLVTFLFFVIYKNKT), serve as a signal peptide directing secretion. The Extracellular segment spans residues 19 to 91 (FVDCVTKKQD…INQVSNNIMR (73 aa)). The helical transmembrane segment at 92–112 (VYISLLSLFLFPYFSYIGIFG) threads the bilayer. At 113-117 (HSRNK) the chain is on the cytoplasmic side. Residues 118–138 (ANLTLSSLLAYFALLVSFFLF) traverse the membrane as a helical segment. Residues 139–140 (NG) are Extracellular-facing. Residues 141–161 (ILNIGFVTSLPLVVAVLIFIL) traverse the membrane as a helical segment. The Cytoplasmic portion of the chain corresponds to 162–176 (GVSDCEINFLYKYTR). A helical membrane pass occupies residues 177–197 (YIFCFIISKLIYDVVTYISKD). The Extracellular segment spans residues 198 to 218 (GANIFDYGFSGHIYMNLLRGK). A helical membrane pass occupies residues 219–239 (YYIVLKLIHLIILSLISLIII). Topologically, residues 240-262 (KICPKIFSNNHLKSPISITFDKY) are cytoplasmic. Residues 263–283 (IISFLCSLPIATAISQVFYLL) traverse the membrane as a helical segment. At 284–305 (SKTINPIDPSIFFMIPSSINFS) the chain is on the extracellular side. A helical transmembrane segment spans residues 306–326 (STGTIFSLSIWILMSYLMTFL). The Cytoplasmic portion of the chain corresponds to 327 to 349 (RNKVEADFNNILNKIPNNLPDFI).

The protein resides in the cell membrane. Functionally, involved in the development of male gametocytes. The chain is Sexual stage-specific protein G37 from Plasmodium berghei (strain Anka).